The chain runs to 177 residues: Large ribosomal subunit protein uL6 (177 aa).

It belongs to the universal ribosomal protein uL6 family. Part of the 50S ribosomal subunit.

In terms of biological role, this protein binds to the 23S rRNA, and is important in its secondary structure. It is located near the subunit interface in the base of the L7/L12 stalk, and near the tRNA binding site of the peptidyltransferase center. This chain is Large ribosomal subunit protein uL6, found in Methanococcoides burtonii (strain DSM 6242 / NBRC 107633 / OCM 468 / ACE-M).